The sequence spans 149 residues: D-aminoacyl-tRNA deacylase (149 aa).

A Gly-cisPro motif, important for rejection of L-amino acids motif is present at residues 137–138; the sequence is GP.

It belongs to the DTD family. As to quaternary structure, homodimer.

It localises to the cytoplasm. The enzyme catalyses glycyl-tRNA(Ala) + H2O = tRNA(Ala) + glycine + H(+). It carries out the reaction a D-aminoacyl-tRNA + H2O = a tRNA + a D-alpha-amino acid + H(+). In terms of biological role, an aminoacyl-tRNA editing enzyme that deacylates mischarged D-aminoacyl-tRNAs. Also deacylates mischarged glycyl-tRNA(Ala), protecting cells against glycine mischarging by AlaRS. Acts via tRNA-based rather than protein-based catalysis; rejects L-amino acids rather than detecting D-amino acids in the active site. By recycling D-aminoacyl-tRNA to D-amino acids and free tRNA molecules, this enzyme counteracts the toxicity associated with the formation of D-aminoacyl-tRNA entities in vivo and helps enforce protein L-homochirality. This chain is D-aminoacyl-tRNA deacylase, found in Paracoccus denitrificans (strain Pd 1222).